Here is an 81-residue protein sequence, read N- to C-terminus: RNA-binding protein Hfq (81 aa).

Residues 10 to 69 form the Sm domain; it reads DPFLNTLRKEHVPVSIYLVNGIKLQGQVDSFDQYVILLKNTVTQMVYKHAISTIVPGRAV.

This sequence belongs to the Hfq family. Homohexamer.

In terms of biological role, RNA chaperone that binds small regulatory RNA (sRNAs) and mRNAs to facilitate mRNA translational regulation in response to envelope stress, environmental stress and changes in metabolite concentrations. Also binds with high specificity to tRNAs. The protein is RNA-binding protein Hfq of Methylobacillus flagellatus (strain ATCC 51484 / DSM 6875 / VKM B-1610 / KT).